A 152-amino-acid polypeptide reads, in one-letter code: MAELKVSAIKEGTVIDHIPAGKGLKVIQILGLGELKNGGAVLLAMNVPSKKLGRKDIVKVEGKFLSEEEVNKIALVAPTATVNIIREYKVVEKFKVEIPDVIEGILKCGNPNCITHYEYVTPKFYVISKEPLKVRCHYCERTMEEEEILANL.

Positions 108, 113, 136, and 139 each coordinate Zn(2+).

It belongs to the PyrI family. As to quaternary structure, contains catalytic and regulatory chains. Zn(2+) is required as a cofactor.

In terms of biological role, involved in allosteric regulation of aspartate carbamoyltransferase. This Pyrococcus furiosus (strain ATCC 43587 / DSM 3638 / JCM 8422 / Vc1) protein is Aspartate carbamoyltransferase regulatory chain.